Reading from the N-terminus, the 545-residue chain is Probable target of rapamycin complex 2 subunit BIT2 (545 aa).

2 disordered regions span residues 1 to 24 (MATD…PNIK) and 78 to 166 (DGSN…GTSS). Polar residues-rich tracts occupy residues 11-24 (ATSG…PNIK), 106-130 (IGSS…SNSR), and 151-166 (RSGS…GTSS).

Interacts with the target of rapamycin complex 2 (TORC2) subunit TSC11 and the TORC2 effectors SLM1 and SLM2.

In Saccharomyces cerevisiae (strain ATCC 204508 / S288c) (Baker's yeast), this protein is Probable target of rapamycin complex 2 subunit BIT2 (BIT2).